Here is a 187-residue protein sequence, read N- to C-terminus: MATTADFKNGLVLKIDNKLQQIIEFQHVKPGKGPAFVRTKLKDVVSGKVTDKTFNAGVKVETATVDRRDMTYLYNDGSSYVVMDEKTFEQAELAPHIFGDAARFLLENTTVQVSFHEGEPLFAELPISLDLRIEHTDPGLQGDRSTGGTKPATLETGAEIQVPLFIETGNVVKVDTRDGSYLSRVNN.

It belongs to the elongation factor P family.

The protein resides in the cytoplasm. It functions in the pathway protein biosynthesis; polypeptide chain elongation. Its function is as follows. Involved in peptide bond synthesis. Stimulates efficient translation and peptide-bond synthesis on native or reconstituted 70S ribosomes in vitro. Probably functions indirectly by altering the affinity of the ribosome for aminoacyl-tRNA, thus increasing their reactivity as acceptors for peptidyl transferase. The sequence is that of Elongation factor P from Corynebacterium diphtheriae (strain ATCC 700971 / NCTC 13129 / Biotype gravis).